The chain runs to 525 residues: Protein disulfide-isomerase A2 (525 aa).

The signal sequence occupies residues 1–21; the sequence is MSRQLLPVLLLLLLRASCPWG. In terms of domain architecture, Thioredoxin 1 spans 27-152; it reads RSPSEEPPEE…IAEWLRRRVG (126 aa). Residues Cys-71 and Cys-74 each act as nucleophile in the active site. Cys-71 and Cys-74 are disulfide-bonded. Residues Asn-127 and Asn-284 are each glycosylated (N-linked (GlcNAc...) asparagine). A Thioredoxin 2 domain is found at 367-496; that stretch reads VLNGQVKPYL…FSKFLDNGGV (130 aa). Catalysis depends on nucleophile residues Cys-418 and Cys-421. Cys-418 and Cys-421 are oxidised to a cystine. Positions 492 to 525 are disordered; sequence DNGGVLPTEEPPEEPAAPFPEPPANSTMGSKEEL. Pro residues predominate over residues 505-514; sequence EPAAPFPEPP. An N-linked (GlcNAc...) asparagine glycan is attached at Asn-516. Positions 516 to 525 are enriched in polar residues; it reads NSTMGSKEEL. Residues 522–525 carry the Prevents secretion from ER motif; that stretch reads KEEL.

The protein belongs to the protein disulfide isomerase family. As to quaternary structure, monomer; predominantly as monomer under reducing conditions. Homodimer; disulfide-linked. Part of a large chaperone multiprotein complex comprising DNAJB11, HSP90B1, HSPA5, HYOU, PDIA2, PDIA4, PDIA6, PPIB, SDF2L1, UGGT1 and very small amounts of ERP29, but not, or at very low levels, CALR nor CANX. In terms of processing, the disulfide-linked homodimer exhibits an enhanced chaperone activity. Glycosylated. As to expression, highly expressed in pancreas (at protein level).

The protein localises to the endoplasmic reticulum lumen. It carries out the reaction Catalyzes the rearrangement of -S-S- bonds in proteins.. Acts as an intracellular estrogen-binding protein. May be involved in modulating cellular levels and biological functions of estrogens in the pancreas. May act as a chaperone that inhibits aggregation of misfolded proteins. In Homo sapiens (Human), this protein is Protein disulfide-isomerase A2 (PDIA2).